A 336-amino-acid polypeptide reads, in one-letter code: MLPDLTTLSDFRNALAQAPGADADARAACEDRNGQLTKPPGALGQLEEIAIWYGSWRGTARPEVRAPQVIVFAGNHGVTARGVSAFPAEVTVQMVANFKAGGAAINQLAQLADARMDVHALELDRPTADFTQGPAMSEEDLLAALRTGWNAVDPASDVLVVGEMGIGNTTSAAAICHALYGGEPGDWTGRGTGVDDEGLALKTAVIAEAVALHGSRDGLEVLRCLGGREIAAMAGAIAAARVLRIPVILDGFICCAAAASLARLHDQALDHAVAGHQSAEGGHQALLARLGKAPLLSLGLRLGEGSGAALAIQVLKGALACHSGMATFAEAGVSDG.

Catalysis depends on glutamate 304, which acts as the Proton acceptor.

It belongs to the CobT family.

The catalysed reaction is 5,6-dimethylbenzimidazole + nicotinate beta-D-ribonucleotide = alpha-ribazole 5'-phosphate + nicotinate + H(+). It participates in nucleoside biosynthesis; alpha-ribazole biosynthesis; alpha-ribazole from 5,6-dimethylbenzimidazole: step 1/2. Its function is as follows. Catalyzes the synthesis of alpha-ribazole-5'-phosphate from nicotinate mononucleotide (NAMN) and 5,6-dimethylbenzimidazole (DMB). The sequence is that of Nicotinate-nucleotide--dimethylbenzimidazole phosphoribosyltransferase from Ruegeria sp. (strain TM1040) (Silicibacter sp.).